We begin with the raw amino-acid sequence, 179 residues long: Large ribosomal subunit protein uL6 (179 aa).

Belongs to the universal ribosomal protein uL6 family. Part of the 50S ribosomal subunit.

In terms of biological role, this protein binds to the 23S rRNA, and is important in its secondary structure. It is located near the subunit interface in the base of the L7/L12 stalk, and near the tRNA binding site of the peptidyltransferase center. This Leptospira biflexa serovar Patoc (strain Patoc 1 / ATCC 23582 / Paris) protein is Large ribosomal subunit protein uL6.